The following is a 344-amino-acid chain: Nuclear distribution protein nudE homolog 1 (344 aa).

A self-association region spans residues 1–93 (MEDSGKTFGS…MQHSEGYRQI (93 aa)). Residues 18–188 (WRDLAMTYKQ…ELAVQQKQDK (171 aa)) adopt a coiled-coil conformation. Over residues 30 to 47 (ENTQEELREFQEGSREYE) the composition is skewed to basic and acidic residues. The disordered stretch occupies residues 30–65 (ENTQEELREFQEGSREYEAELETQLQQAETRNRDLL). Residues 88–156 (EGYRQISALE…ERNAFLESEL (69 aa)) are interaction with PAFAH1B1. The tract at residues 167–290 (QRLKDEARDL…QSPSRKSGPA (124 aa)) is interaction with CENPF. The segment at 181–243 (AVQQKQDKPR…CGLGSPSSGT (63 aa)) is disordered. The span at 208 to 230 (ATGSAPSTPITHQGSSSGLNTPE) shows a compositional bias: polar residues. Position 211 is a phosphoserine (Ser-211). A phosphothreonine mark is found at Thr-215, Thr-228, Thr-243, and Thr-246. Cys-274 carries the S-palmitoyl cysteine; by ZDHHC2, ZDHHC3 and ZDHHC7 lipid modification. Residues 279–337 (YDQSPSRKSGPALGRGTKNRDGIDRRPGSTAVGDKGSGKRLEFAKPSSQLSSPALPSTQ) are disordered. Ser-282 is subject to Phosphoserine. The span at 296–305 (KNRDGIDRRP) shows a compositional bias: basic and acidic residues. Residues 324 to 335 (PSSQLSSPALPS) show a composition bias toward low complexity.

Belongs to the nudE family. In terms of assembly, homodimer. Interacts with CNTRL, LIS1, dynein, SLMAP and TCP1. Interacts with CENPF, dynactin, tubulin gamma, PAFAH1B1, PCM1 and PCNT. Interacts with ZNF365. Interacts with GTP-bound RAB9A and RAB9B; the interaction leads to RAB9-dynein motor tethering. Interacts (via C-terminus) with MCRS1 (via C-terminus); phosphorylation of NDE1 inhibits the interaction. In terms of processing, phosphorylated in mitosis. Phosphorylation at Thr-246 is essential for the G2/M transition. As to expression, expressed in brain, heart, kidney, liver, lung, skeletal muscle, spleen and testis.

Its subcellular location is the cytoplasm. It is found in the cytoskeleton. The protein resides in the microtubule organizing center. It localises to the centrosome. The protein localises to the spindle. Its subcellular location is the chromosome. It is found in the centromere. The protein resides in the kinetochore. It localises to the cleavage furrow. The protein localises to the cytoplasmic vesicle membrane. Its function is as follows. Required for centrosome duplication and formation and function of the mitotic spindle. Essential for the development of the cerebral cortex. May regulate the production of neurons by controlling the orientation of the mitotic spindle during division of cortical neuronal progenitors of the proliferative ventricular zone of the brain. Orientation of the division plane perpendicular to the layers of the cortex gives rise to two proliferative neuronal progenitors whereas parallel orientation of the division plane yields one proliferative neuronal progenitor and a postmitotic neuron. A premature shift towards a neuronal fate within the progenitor population may result in an overall reduction in the final number of neurons and an increase in the number of neurons in the deeper layers of the cortex. Acts as a RAB9A/B effector that tethers RAB9-associated late endosomes to the dynein motor for their retrograde transport to the trans-Golgi network. In Rattus norvegicus (Rat), this protein is Nuclear distribution protein nudE homolog 1.